The primary structure comprises 601 residues: Elongation factor 4 (601 aa).

The region spanning 7-189 (RNIRNFSIIA…AIVHRIPPPK (183 aa)) is the tr-type G domain. GTP is bound by residues 19–24 (DHGKST) and 136–139 (NKID).

This sequence belongs to the TRAFAC class translation factor GTPase superfamily. Classic translation factor GTPase family. LepA subfamily.

It is found in the cell inner membrane. The catalysed reaction is GTP + H2O = GDP + phosphate + H(+). Required for accurate and efficient protein synthesis under certain stress conditions. May act as a fidelity factor of the translation reaction, by catalyzing a one-codon backward translocation of tRNAs on improperly translocated ribosomes. Back-translocation proceeds from a post-translocation (POST) complex to a pre-translocation (PRE) complex, thus giving elongation factor G a second chance to translocate the tRNAs correctly. Binds to ribosomes in a GTP-dependent manner. In Xanthomonas campestris pv. campestris (strain 8004), this protein is Elongation factor 4.